Here is a 243-residue protein sequence, read N- to C-terminus: UPF0246 protein SUB1767 (243 aa).

This sequence belongs to the UPF0246 family.

The protein is UPF0246 protein SUB1767 of Streptococcus uberis (strain ATCC BAA-854 / 0140J).